A 123-amino-acid polypeptide reads, in one-letter code: Highly acidic elicitin 20 (123 aa).

The first 20 residues, 1-20 (MQFTALFAATAVALVGSVSA), serve as a signal peptide directing secretion. Intrachain disulfides connect cysteine 23–cysteine 91, cysteine 47–cysteine 76, and cysteine 71–cysteine 115.

It belongs to the elicitin family.

Its subcellular location is the secreted. Functionally, induces local and distal defense responses (incompatible hypersensitive reaction) in plants from the solanaceae and cruciferae families. Elicits leaf necrosis and causes the accumulation of pathogenesis-related proteins. Might interact with the lipidic molecules of the plasma membrane. The chain is Highly acidic elicitin 20 (B20) from Phytophthora cryptogea.